The primary structure comprises 67 residues: DNA-directed RNA polymerase subunit omega (67 aa).

It belongs to the RNA polymerase subunit omega family. In terms of assembly, the RNAP catalytic core consists of 2 alpha, 1 beta, 1 beta' and 1 omega subunit. When a sigma factor is associated with the core the holoenzyme is formed, which can initiate transcription.

The catalysed reaction is RNA(n) + a ribonucleoside 5'-triphosphate = RNA(n+1) + diphosphate. Functionally, promotes RNA polymerase assembly. Latches the N- and C-terminal regions of the beta' subunit thereby facilitating its interaction with the beta and alpha subunits. The sequence is that of DNA-directed RNA polymerase subunit omega from Bordetella avium (strain 197N).